We begin with the raw amino-acid sequence, 394 residues long: 1-deoxy-D-xylulose 5-phosphate reductoisomerase (394 aa).

NADPH is bound by residues threonine 12, glycine 13, serine 14, isoleucine 15, lysine 39, glutamine 40, and asparagine 126. Lysine 127 provides a ligand contact to 1-deoxy-D-xylulose 5-phosphate. NADPH is bound at residue glutamate 128. Aspartate 152 contacts Mn(2+). Serine 153, glutamate 154, serine 183, and histidine 206 together coordinate 1-deoxy-D-xylulose 5-phosphate. A Mn(2+)-binding site is contributed by glutamate 154. Residue glycine 212 coordinates NADPH. Positions 219, 224, 225, and 228 each coordinate 1-deoxy-D-xylulose 5-phosphate. Position 228 (glutamate 228) interacts with Mn(2+).

This sequence belongs to the DXR family. It depends on Mg(2+) as a cofactor. The cofactor is Mn(2+).

It catalyses the reaction 2-C-methyl-D-erythritol 4-phosphate + NADP(+) = 1-deoxy-D-xylulose 5-phosphate + NADPH + H(+). It participates in isoprenoid biosynthesis; isopentenyl diphosphate biosynthesis via DXP pathway; isopentenyl diphosphate from 1-deoxy-D-xylulose 5-phosphate: step 1/6. Its function is as follows. Catalyzes the NADPH-dependent rearrangement and reduction of 1-deoxy-D-xylulose-5-phosphate (DXP) to 2-C-methyl-D-erythritol 4-phosphate (MEP). The polypeptide is 1-deoxy-D-xylulose 5-phosphate reductoisomerase (Neisseria gonorrhoeae (strain ATCC 700825 / FA 1090)).